The following is a 365-amino-acid chain: Putative F-box/kelch-repeat protein At4g39290 (365 aa).

The region spanning Gln10–Phe58 is the F-box domain. 2 Kelch repeats span residues Asp118 to Asn165 and Lys167 to Gly213.

The protein is Putative F-box/kelch-repeat protein At4g39290 of Arabidopsis thaliana (Mouse-ear cress).